We begin with the raw amino-acid sequence, 738 residues long: Interleukin-17 receptor D (738 aa).

The N-terminal stretch at 1–16 (MAPWLQLCSFFFTVNA) is a signal peptide. Residues 17-299 (CLNGSQLAVA…VQSPWAGPIR (283 aa)) are Extracellular-facing. Residues N19, N55, N62, N80, N137, N171, N206, and N277 are each glycosylated (N-linked (GlcNAc...) asparagine). A helical transmembrane segment spans residues 300-320 (AVAITVPLVVISAFATLFTVM). Topologically, residues 321-738 (CRKKQQENIY…TDELQALAPL (418 aa)) are cytoplasmic. The SEFIR domain maps to 355-509 (QPKVFLCYSN…LMDHLPELCA (155 aa)). Residues 653–738 (GSPSEMPRDS…TDELQALAPL (86 aa)) form a disordered region. Residues 667–702 (SSVPSSELSLPLMEGLSPDQIETSSLTESVSSSSGL) are compositionally biased toward low complexity. Residues 720–731 (SREHGCHSHTDE) are compositionally biased toward basic and acidic residues.

Self-associates. Interacts with FGFR2 and phosphorylated MAP2K1 or MAP2K2. Associates with a MAP2K1/2-MAPK1/3 complex. Interacts with FGFR1 and MAP3K7.

Its subcellular location is the golgi apparatus membrane. It is found in the cell membrane. Feedback inhibitor of fibroblast growth factor mediated Ras-MAPK signaling and ERK activation. Regulates the nuclear ERK signaling pathway by spatially blocking nuclear translocation of activated ERK. Mediates JNK activation and may be involved in apoptosis. May inhibit FGF-induced FGFR1 tyrosine phosphorylation. Might have a role in the early stages of fate specification of GnRH-secreting neurons. Inhibits TGFB-induced epithelial-to-mesenchymal transition in lens epithelial cells. The chain is Interleukin-17 receptor D (Il17rd) from Mus musculus (Mouse).